A 96-amino-acid polypeptide reads, in one-letter code: Small ribosomal subunit protein bS6 (96 aa).

This sequence belongs to the bacterial ribosomal protein bS6 family.

Functionally, binds together with bS18 to 16S ribosomal RNA. This Thermobifida fusca (strain YX) protein is Small ribosomal subunit protein bS6.